The primary structure comprises 361 residues: Peptide chain release factor 1 (361 aa).

Residue Gln-237 is modified to N5-methylglutamine. Residues 285–296 show a composition bias toward basic and acidic residues; that stretch reads DEKRRSAEESTR. The disordered stretch occupies residues 285–305; the sequence is DEKRRSAEESTRRNLVSSGDR.

The protein belongs to the prokaryotic/mitochondrial release factor family. Methylated by PrmC. Methylation increases the termination efficiency of RF1.

The protein localises to the cytoplasm. Peptide chain release factor 1 directs the termination of translation in response to the peptide chain termination codons UAG and UAA. The chain is Peptide chain release factor 1 from Shewanella halifaxensis (strain HAW-EB4).